Here is a 437-residue protein sequence, read N- to C-terminus: Trigger factor (437 aa).

Residues 161 to 246 (DDQVNIDFVG…VNSVSAPVLP (86 aa)) form the PPIase FKBP-type domain.

It belongs to the FKBP-type PPIase family. Tig subfamily.

It localises to the cytoplasm. The enzyme catalyses [protein]-peptidylproline (omega=180) = [protein]-peptidylproline (omega=0). Functionally, involved in protein export. Acts as a chaperone by maintaining the newly synthesized protein in an open conformation. Functions as a peptidyl-prolyl cis-trans isomerase. This is Trigger factor from Pseudomonas putida (strain ATCC 47054 / DSM 6125 / CFBP 8728 / NCIMB 11950 / KT2440).